Here is a 281-residue protein sequence, read N- to C-terminus: Sulfur carrier protein FdhD (281 aa).

Cys-117 acts as the Cysteine persulfide intermediate in catalysis.

This sequence belongs to the FdhD family.

The protein localises to the cytoplasm. In terms of biological role, required for formate dehydrogenase (FDH) activity. Acts as a sulfur carrier protein that transfers sulfur from IscS to the molybdenum cofactor prior to its insertion into FDH. The sequence is that of Sulfur carrier protein FdhD from Xanthomonas campestris pv. campestris (strain 8004).